The primary structure comprises 203 residues: UPF0637 protein EF_3078 (203 aa).

Belongs to the UPF0637 family.

This is UPF0637 protein EF_3078 from Enterococcus faecalis (strain ATCC 700802 / V583).